A 177-amino-acid chain; its full sequence is Prorelaxin (177 aa).

Residues 1-25 (MLRWFLSHLLGVWLLLSQLPREIPA) form the signal peptide. 3 disulfides stabilise this stretch: Cys34–Cys164, Cys46–Cys177, and Cys163–Cys168. The propeptide at 63–149 (QISEPLAEVV…KSLSKLDKHP (87 aa)) is connecting peptide.

The protein belongs to the insulin family. As to quaternary structure, heterodimer of a B chain and an A chain linked by two disulfide bonds. As to expression, placenta; syncytiotrophoblast.

It localises to the secreted. Relaxin is an ovarian hormone that acts with estrogen to produce dilatation of the birth canal in many mammals. The sequence is that of Prorelaxin (RLN) from Canis lupus familiaris (Dog).